An 843-amino-acid chain; its full sequence is Pullulanase (843 aa).

A signal peptide spans 1-19 (MKTKLWLLLVLLLSALIFS). The Nucleophile role is filled by Asp535. Residue Glu564 is the Proton donor of the active site.

Belongs to the glycosyl hydrolase 13 family.

The enzyme catalyses Hydrolysis of (1-&gt;6)-alpha-D-glucosidic linkages in pullulan, amylopectin and glycogen, and in the alpha- and beta-limit dextrins of amylopectin and glycogen.. The chain is Pullulanase (pulA) from Thermotoga maritima (strain ATCC 43589 / DSM 3109 / JCM 10099 / NBRC 100826 / MSB8).